Consider the following 309-residue polypeptide: Ribonuclease H2 subunit B (309 aa).

Ala2 is subject to N-acetylalanine. An N6-acetyllysine modification is found at Lys295. The residue at position 296 (Ser296) is a Phosphoserine.

This sequence belongs to the RNase H2 subunit B family. The RNase H2 complex is a heterotrimer composed of the catalytic subunit RNASEH2A and the non-catalytic subunits RNASEH2B and RNASEH2C.

The protein resides in the nucleus. In terms of biological role, non catalytic subunit of RNase H2, an endonuclease that specifically degrades the RNA of RNA:DNA hybrids. Participates in DNA replication, possibly by mediating the removal of lagging-strand Okazaki fragment RNA primers during DNA replication. Mediates the excision of single ribonucleotides from DNA:RNA duplexes. The polypeptide is Ribonuclease H2 subunit B (RNASEH2B) (Bos taurus (Bovine)).